A 508-amino-acid chain; its full sequence is MGLPWYRVHTVVLNDPGRLLSVHIMHTALVAGWAGSMALYELAVFDPSDPVLDPMWRQGMFVIPFMTRLGITNSWGGWNITGGTITNPGLWSYEGVAGAHIVFSGLCFLAAIWHWVYWDLEIFCDERTGKPSLDLPKIFGIHLFLSGVACFGFGAFHVTGLYGPGIWVSDPYGLTGKVQPVNPAWGVEGFDPFVPGGIASHHIAAGTLGILAGLFHLSVRPPQRLYKGLRMGNIETVLSSSIAAVFFAAFVVAGTMWYGSATTPIELFGPTRYEWDQGYFQQEIYRRVSAGLAENQSLSEVWSKIPEKLAFYDYIGNNPAKGGLFRAGSMDNGDGIAVGWLGHPVFRNKEGRELFVRRMPTFFETFPVVLVDGDGIVRAYVPFRRAESKYSVEQVGVTVELYGGELNGVSYSDPATVKKYARRAQLGEIFELDRATLKSDGVFRSSPRGWFTFGHASFALLFFFGHIWHGARTLFRDVFAGIDPDLDAQVEFGAFQKLGDPTTKRQAA.

6 helical membrane-spanning segments follow: residues 21-36 (SVHIMHTALVAGWAGS), 101-115 (IVFSGLCFLAAIWHW), 140-156 (GIHLFLSGVACFGFGAF), 203-218 (IAAGTLGILAGLFHLS), 237-252 (VLSSSIAAVFFAAFVV), and 457-472 (SFALLFFFGHIWHGAR).

This sequence belongs to the PsbB/PsbC family. PsbB subfamily. In terms of assembly, PSII is composed of 1 copy each of membrane proteins PsbA, PsbB, PsbC, PsbD, PsbE, PsbF, PsbH, PsbI, PsbJ, PsbK, PsbL, PsbM, PsbT, PsbX, PsbY, PsbZ, Psb30/Ycf12, at least 3 peripheral proteins of the oxygen-evolving complex and a large number of cofactors. It forms dimeric complexes. Binds multiple chlorophylls. PSII binds additional chlorophylls, carotenoids and specific lipids. serves as cofactor.

The protein resides in the plastid. The protein localises to the chloroplast thylakoid membrane. In terms of biological role, one of the components of the core complex of photosystem II (PSII). It binds chlorophyll and helps catalyze the primary light-induced photochemical processes of PSII. PSII is a light-driven water:plastoquinone oxidoreductase, using light energy to abstract electrons from H(2)O, generating O(2) and a proton gradient subsequently used for ATP formation. This is Photosystem II CP47 reaction center protein from Aethionema grandiflorum (Persian stone-cress).